We begin with the raw amino-acid sequence, 180 residues long: UPF0227 protein PC1_2487 (180 aa).

This sequence belongs to the UPF0227 family.

The chain is UPF0227 protein PC1_2487 from Pectobacterium carotovorum subsp. carotovorum (strain PC1).